The following is a 781-amino-acid chain: uncharacterized protein (781 aa).

The disordered stretch occupies residues 1–34; it reads MNIAEEPSDEVISSGPEDTDICSQQTSASAEAGD. Position 29 is a phosphoserine (Ser29). 2 RRM domains span residues 195-273 and 295-418; these read GNIF…YHVE and RCLF…KAVQ. The interval 345–375 is disordered; sequence SNTRSSSSVSFNEEGSVESNKSSNNTNGNAQ. Residues 347–364 are compositionally biased toward low complexity; the sequence is TRSSSSVSFNEEGSVESN. A compositionally biased stretch (polar residues) spans 365–374; it reads KSSNNTNGNA. Phosphoserine occurs at positions 433, 435, 482, and 485. Phosphothreonine is present on Thr486. At Ser501 the chain carries Phosphoserine. Residues 540-638 form the RRM 3 domain; that stretch reads SNLYVKHIPL…QVLSVSFAQK (99 aa). The interval 640–668 is disordered; the sequence is GNLSSSDDDDQSQTDNSSKFQNFQPHNDY.

Interacts with RBG1.

This is an uncharacterized protein from Saccharomyces cerevisiae (strain ATCC 204508 / S288c) (Baker's yeast).